A 254-amino-acid chain; its full sequence is Pimeloyl-[acyl-carrier protein] methyl ester esterase (254 aa).

Positions 14-242 (LVLLHGWGMN…ASHAPFISHP (229 aa)) constitute an AB hydrolase-1 domain. Residues W20, 82–83 (SL), and 143–147 (FLAIQ) each bind substrate. S82 acts as the Nucleophile in catalysis. Catalysis depends on residues D207 and H235. H235 contacts substrate.

This sequence belongs to the AB hydrolase superfamily. Carboxylesterase BioH family. As to quaternary structure, monomer.

The protein localises to the cytoplasm. It catalyses the reaction 6-carboxyhexanoyl-[ACP] methyl ester + H2O = 6-carboxyhexanoyl-[ACP] + methanol + H(+). It participates in cofactor biosynthesis; biotin biosynthesis. The physiological role of BioH is to remove the methyl group introduced by BioC when the pimeloyl moiety is complete. It allows to synthesize pimeloyl-ACP via the fatty acid synthetic pathway through the hydrolysis of the ester bonds of pimeloyl-ACP esters. The sequence is that of Pimeloyl-[acyl-carrier protein] methyl ester esterase from Aeromonas hydrophila subsp. hydrophila (strain ATCC 7966 / DSM 30187 / BCRC 13018 / CCUG 14551 / JCM 1027 / KCTC 2358 / NCIMB 9240 / NCTC 8049).